The sequence spans 236 residues: Large ribosomal subunit protein uL1 (236 aa).

This sequence belongs to the universal ribosomal protein uL1 family. As to quaternary structure, part of the 50S ribosomal subunit.

Its function is as follows. Binds directly to 23S rRNA. The L1 stalk is quite mobile in the ribosome, and is involved in E site tRNA release. Functionally, protein L1 is also a translational repressor protein, it controls the translation of the L11 operon by binding to its mRNA. The sequence is that of Large ribosomal subunit protein uL1 from Corynebacterium glutamicum (strain R).